An 817-amino-acid polypeptide reads, in one-letter code: Cargo-transport protein YPP1 (817 aa).

The protein belongs to the YPP1 family. In terms of assembly, interacts with ribosomes.

The protein resides in the cytoplasmic granule. It is found in the cell membrane. Involved in endocytosis. In Saccharomyces cerevisiae (strain ATCC 204508 / S288c) (Baker's yeast), this protein is Cargo-transport protein YPP1 (YPP1).